A 383-amino-acid chain; its full sequence is uncharacterized protein (383 aa).

Transmembrane regions (helical) follow at residues 25–45 (LWVA…PAVA), 53–73 (IYNV…PIMV), 103–123 (FTMV…LLTA), 139–159 (IAGC…MWGY), 166–186 (GLTL…YAPL), 200–220 (WQTI…AGIY), 238–258 (FLHY…ILLF), 272–292 (IFLI…ITYV), 309–329 (LIGA…LFGL), and 332–352 (GAAL…LMLV).

The protein belongs to the arsenical resistance-3 (ACR3) (TC 2.A.59) family.

Its subcellular location is the cell membrane. This is an uncharacterized protein from Synechocystis sp. (strain ATCC 27184 / PCC 6803 / Kazusa).